The sequence spans 335 residues: L-threo-3-deoxy-hexylosonate aldolase (335 aa).

50-51 is a binding site for substrate; it reads SN. Residue Lys-175 is the Schiff-base intermediate with substrate of the active site.

It belongs to the DapA family.

The enzyme catalyses 2-dehydro-3-deoxy-L-galactonate = L-glyceraldehyde + pyruvate. It functions in the pathway carbohydrate acid metabolism. Mediates the conversion of 2-dehydro-3-deoxy-L-galactonate to pyruvate and L-glyceraldehyde in D-galacturonate catabolic process. The chain is L-threo-3-deoxy-hexylosonate aldolase (gaaC) from Aspergillus niger.